The sequence spans 147 residues: Arginine vasopressin-induced protein 1 (147 aa).

2 disordered regions span residues 1 to 27 and 99 to 147; these read MGTPASVVSEPPPWQAPTEARGRKQAS and EPHS…QIRH. Positions 108 to 119 are enriched in polar residues; sequence QSATETASTEQY. Residues 121 to 134 are compositionally biased toward basic residues; that stretch reads HSRRKSARIRRNWK.

Its function is as follows. May be involved in MAP kinase activation, epithelial sodium channel (ENaC) down-regulation and cell cycling. The sequence is that of Arginine vasopressin-induced protein 1 (AVPI1) from Pongo abelii (Sumatran orangutan).